We begin with the raw amino-acid sequence, 600 residues long: NADH-quinone oxidoreductase subunit C/D (600 aa).

The interval 1-190 (MVNNMTDLTA…DPFELTKAKQ (190 aa)) is NADH dehydrogenase I subunit C. The segment at 214 to 600 (DFMFLNLGPN…IDFVMSDVDR (387 aa)) is NADH dehydrogenase I subunit D.

In the N-terminal section; belongs to the complex I 30 kDa subunit family. The protein in the C-terminal section; belongs to the complex I 49 kDa subunit family. In terms of assembly, NDH-1 is composed of 13 different subunits. Subunits NuoB, CD, E, F, and G constitute the peripheral sector of the complex.

Its subcellular location is the cell inner membrane. It carries out the reaction a quinone + NADH + 5 H(+)(in) = a quinol + NAD(+) + 4 H(+)(out). Its function is as follows. NDH-1 shuttles electrons from NADH, via FMN and iron-sulfur (Fe-S) centers, to quinones in the respiratory chain. The immediate electron acceptor for the enzyme in this species is believed to be ubiquinone. Couples the redox reaction to proton translocation (for every two electrons transferred, four hydrogen ions are translocated across the cytoplasmic membrane), and thus conserves the redox energy in a proton gradient. In Salmonella paratyphi A (strain ATCC 9150 / SARB42), this protein is NADH-quinone oxidoreductase subunit C/D.